The primary structure comprises 855 residues: Valine--tRNA ligase (855 aa).

Positions Pro44–His54 match the 'HIGH' region motif. The short motif at Lys524–Thr528 is the 'KMSKS' region element. Lys527 serves as a coordination point for ATP. Positions Lys797–Val827 form a coiled coil.

The protein belongs to the class-I aminoacyl-tRNA synthetase family. ValS type 1 subfamily. Monomer.

The protein resides in the cytoplasm. It catalyses the reaction tRNA(Val) + L-valine + ATP = L-valyl-tRNA(Val) + AMP + diphosphate. Its function is as follows. Catalyzes the attachment of valine to tRNA(Val). As ValRS can inadvertently accommodate and process structurally similar amino acids such as threonine, to avoid such errors, it has a 'posttransfer' editing activity that hydrolyzes mischarged Thr-tRNA(Val) in a tRNA-dependent manner. The protein is Valine--tRNA ligase of Solibacter usitatus (strain Ellin6076).